A 286-amino-acid polypeptide reads, in one-letter code: Citrullinase (286 aa).

The CN hydrolase domain maps to 4 to 258; it reads IKVAVVQLSF…DDILYATFDF (255 aa). The Proton acceptor role is filled by glutamate 43. The active site involves lysine 116. Residue cysteine 153 is the Nucleophile of the active site.

This sequence belongs to the carbon-nitrogen hydrolase superfamily.

The enzyme catalyses L-citrulline + H2O + 2 H(+) = L-ornithine + NH4(+) + CO2. Functionally, catalyzes the degradation of citrulline into ornithine, carbon dioxide and ammonia. Contributes to intramacrophage survival, in vivo growth and pathogenesis. The sequence is that of Citrullinase from Francisella tularensis subsp. tularensis (strain SCHU S4 / Schu 4).